Reading from the N-terminus, the 160-residue chain is uncharacterized protein (160 aa).

The signal sequence occupies residues 1 to 29 (MTGKTHIMGGIASCTAAAYYYGFDPVLMA). 2 consecutive transmembrane segments (helical) span residues 67 to 87 (TFTHSLLFMLIMFFITSTYIP) and 137 to 157 (QLVLAGLTLASCYYFYMLFHG).

To E.coli YdjM.

The protein localises to the cell membrane. This is an uncharacterized protein from Bacillus subtilis (strain 168).